The chain runs to 201 residues: Orotate phosphoribosyltransferase (201 aa).

113–121 (EDIITTGKS) contacts 5-phospho-alpha-D-ribose 1-diphosphate. Orotate contacts are provided by Thr-117 and Arg-145.

Belongs to the purine/pyrimidine phosphoribosyltransferase family. PyrE subfamily. As to quaternary structure, homodimer. Requires Mg(2+) as cofactor.

It carries out the reaction orotidine 5'-phosphate + diphosphate = orotate + 5-phospho-alpha-D-ribose 1-diphosphate. The protein operates within pyrimidine metabolism; UMP biosynthesis via de novo pathway; UMP from orotate: step 1/2. In terms of biological role, catalyzes the transfer of a ribosyl phosphate group from 5-phosphoribose 1-diphosphate to orotate, leading to the formation of orotidine monophosphate (OMP). The sequence is that of Orotate phosphoribosyltransferase from Helicobacter acinonychis (strain Sheeba).